The primary structure comprises 428 residues: Glutamate-1-semialdehyde 2,1-aminomutase (428 aa).

Lys-267 carries the N6-(pyridoxal phosphate)lysine modification.

This sequence belongs to the class-III pyridoxal-phosphate-dependent aminotransferase family. HemL subfamily. In terms of assembly, homodimer. The cofactor is pyridoxal 5'-phosphate.

It is found in the cytoplasm. The enzyme catalyses (S)-4-amino-5-oxopentanoate = 5-aminolevulinate. Its pathway is porphyrin-containing compound metabolism; protoporphyrin-IX biosynthesis; 5-aminolevulinate from L-glutamyl-tRNA(Glu): step 2/2. The protein operates within porphyrin-containing compound metabolism; chlorophyll biosynthesis. The sequence is that of Glutamate-1-semialdehyde 2,1-aminomutase from Prochlorococcus marinus (strain MIT 9313).